Consider the following 236-residue polypeptide: uncharacterized protein (236 aa).

Residues 217 to 236 (GESPDNVVRGEGGFGSTGGH) are disordered. Gly residues predominate over residues 226–236 (GEGGFGSTGGH).

This is an uncharacterized protein from Ostreid herpesvirus 1 (isolate France) (OsHV-1).